The chain runs to 59 residues: Large ribosomal subunit protein bL32 (59 aa).

The disordered stretch occupies residues 1–59 (MAVQQNKKSPSKRGMHRSHDFLTTSPLAVEPSTGEVHLRHHISPNGYYRGKKVVKTKND). Positions 49-59 (RGKKVVKTKND) are enriched in basic residues.

This sequence belongs to the bacterial ribosomal protein bL32 family.

The polypeptide is Large ribosomal subunit protein bL32 (Burkholderia mallei (strain NCTC 10247)).